Here is a 332-residue protein sequence, read N- to C-terminus: Methionine synthase (332 aa).

Zn(2+) is bound by residues histidine 211, cysteine 213, and cysteine 296.

It belongs to the archaeal MetE family. Zn(2+) is required as a cofactor.

It functions in the pathway amino-acid biosynthesis; L-methionine biosynthesis via de novo pathway. Its function is as follows. Catalyzes the transfer of a methyl group to L-homocysteine resulting in methionine formation. The physiological methyl donor is unknown. The polypeptide is Methionine synthase (Saccharolobus islandicus (strain Y.G.57.14 / Yellowstone #1) (Sulfolobus islandicus)).